The chain runs to 831 residues: AdoMet-dependent rRNA methyltransferase SPB1 (831 aa).

Residues Gly58, Trp60, Asp78, Asp94, and Asp119 each contribute to the S-adenosyl-L-methionine site. Lys159 acts as the Proton acceptor in catalysis. Coiled coils occupy residues 346–389 (LTED…QMNM) and 440–479 (NDIN…ERDA). Disordered regions lie at residues 492 to 535 (DEGW…ADQR) and 565 to 645 (MNKK…DQQS). Positions 499–510 (ESDKEGSDKETE) are enriched in basic and acidic residues. 3 stretches are compositionally biased toward acidic residues: residues 511 to 526 (ANDY…DDDE), 594 to 611 (MEVD…DSDF), and 618 to 631 (PDEE…DNEN). Positions 632-645 (DVSRKYSKAKDQQS) are enriched in basic and acidic residues. Positions 729 to 782 (LEAQGRKKLRALKRLEKLKKKSDMINEDSAKSERDKADEIQKLMKKLTKKQKTK) form a coiled coil.

Belongs to the class I-like SAM-binding methyltransferase superfamily. RNA methyltransferase RlmE family. SPB1 subfamily. Component of the nucleolar and nucleoplasmic pre-60S ribosomal particle.

Its subcellular location is the nucleus. It is found in the nucleolus. It catalyses the reaction a ribonucleotide in rRNA + S-adenosyl-L-methionine = a 2'-O-methylribonucleotide in rRNA + S-adenosyl-L-homocysteine + H(+). In terms of biological role, required for proper assembly of pre-ribosomal particles during the biogenesis of the 60S ribosomal subunit. This chain is AdoMet-dependent rRNA methyltransferase SPB1, found in Debaryomyces hansenii (strain ATCC 36239 / CBS 767 / BCRC 21394 / JCM 1990 / NBRC 0083 / IGC 2968) (Yeast).